The sequence spans 316 residues: Universal stress protein E (316 aa).

This sequence belongs to the universal stress protein A family.

It is found in the cytoplasm. Required for resistance to DNA-damaging agents. This chain is Universal stress protein E (uspE), found in Escherichia coli O157:H7.